Consider the following 578-residue polypeptide: Probable lysosomal cobalamin transporter (578 aa).

A run of 2 helical transmembrane segments spans residues 8-28 and 46-66; these read LIWV…SVFI and IFAI…VALV. Asn70 carries N-linked (GlcNAc...) asparagine glycosylation. The next 2 helical transmembrane spans lie at 95–115 and 145–165; these read VVYY…IPFT and TITF…VPVA. N-linked (GlcNAc...) asparagine glycosylation occurs at Asn168. A run of 6 helical transmembrane segments spans residues 188–208, 312–332, 347–367, 375–395, 419–439, and 506–526; these read ALTF…VLYT, LLGG…MLLT, GYIL…VQAA, VIFT…IAIV, LTTA…SMVV, and FFGV…LIVV. The segment at 539-578 is disordered; the sequence is RQMDEDAEEAEEEGLLASTGRRLDTAWQDITGRSNRQRDS. Residues 540 to 552 are compositionally biased toward acidic residues; it reads QMDEDAEEAEEEG.

This sequence belongs to the LIMR family. LMBRD1 subfamily.

The protein resides in the lysosome membrane. Functionally, probable lysosomal cobalamin transporter. Required to export cobalamin from lysosomes allowing its conversion to cofactors. In Aspergillus terreus (strain NIH 2624 / FGSC A1156), this protein is Probable lysosomal cobalamin transporter.